Consider the following 276-residue polypeptide: Urease accessory protein UreD (276 aa).

The protein belongs to the UreD family. UreD, UreF and UreG form a complex that acts as a GTP-hydrolysis-dependent molecular chaperone, activating the urease apoprotein by helping to assemble the nickel containing metallocenter of UreC. The UreE protein probably delivers the nickel.

The protein localises to the cytoplasm. Required for maturation of urease via the functional incorporation of the urease nickel metallocenter. The sequence is that of Urease accessory protein UreD from Verminephrobacter eiseniae (strain EF01-2).